The following is a 325-amino-acid chain: SPbeta prophage-derived uncharacterized protein YopR (325 aa).

This chain is SPbeta prophage-derived uncharacterized protein YopR (yopR), found in Bacillus subtilis (strain 168).